A 245-amino-acid polypeptide reads, in one-letter code: DNA repair protein RecO (245 aa).

The protein belongs to the RecO family.

In terms of biological role, involved in DNA repair and RecF pathway recombination. This is DNA repair protein RecO from Anaplasma phagocytophilum (strain HZ).